A 347-amino-acid polypeptide reads, in one-letter code: Fc receptor-like A (347 aa).

The N-terminal stretch at 1-27 (MKLSCMLIEWALYVCPAVLLATQMSLA) is a signal peptide. 2 Ig-like C2-type domains span residues 77–166 (PFHL…ETAS) and 179–257 (PVLK…RQIS). 2 cysteine pairs are disulfide-bonded: C106/C150 and C199/C247. The interval 272–296 (KPATPETPPPAKAPGPLPLLPTPSD) is disordered. Residues 276-292 (PETPPPAKAPGPLPLLP) show a composition bias toward pro residues.

As to quaternary structure, monomer or homodimer; disulfide-linked.

It is found in the cytoplasm. In terms of biological role, may be implicated in B-cell differentiation and lymphomagenesis. This is Fc receptor-like A (Fcrla) from Rattus norvegicus (Rat).